The following is a 75-amino-acid chain: Caerin-1.1 (75 aa).

A signal peptide spans 1 to 22; that stretch reads MASLKKSLFLVLLLGFVSVSIC. A propeptide spanning residues 23–49 is cleaved from the precursor; that stretch reads EEEKRQEDEDEHEEEGESQEEGSEEKR. A disordered region spans residues 24-49; it reads EEKRQEDEDEHEEEGESQEEGSEEKR. Over residues 30 to 45 the composition is skewed to acidic residues; sequence DEDEHEEEGESQEEGS. Residue Leu74 is modified to Leucine amide.

The protein belongs to the frog skin active peptide (FSAP) family. Caerin subfamily. Post-translationally, the major product is Caerin-1.1; in addition, different peptides are produced that are missing some amino acid residues at the N-terminus or C-terminus. Caerin-1.1.1 and Caerin-1.1.4 are inactive. In terms of tissue distribution, expressed by the skin parotoid and/or rostral glands.

It localises to the secreted. Antimicrobial peptide with antibacterial and antiviral activities. Adopts an alpha helical conformation which can disrupt bacterial membranes. Inhibits the formation of NO by neuronal nitric oxide synthase (nNOS) at micromolar concentrations. Acts by a non-competitive mechanism, probably by binding to calcium/calmodulin and as a consequence blocking calmodulin attachment to nNOS. Functionally, is inactive. The protein is Caerin-1.1 of Ranoidea caerulea (Green tree frog).